A 392-amino-acid polypeptide reads, in one-letter code: Multidrug resistance protein MdtL (392 aa).

12 helical membrane passes run 4 to 24, 38 to 58, 69 to 89, 95 to 115, 131 to 151, 158 to 178, 209 to 229, 246 to 266, 270 to 290, 294 to 314, 331 to 351, and 357 to 377; these read FLLC…MYLV, AQLH…MLFA, PVAI…AQVH, LIGR…AFAI, LLNG…HLIM, SLFY…VFIL, LLIT…SPVL, ALMA…LSLF, TLML…SLAT, VTLI…GVAM, VLGI…AIIG, and MLIG…LVVT.

Belongs to the major facilitator superfamily. DHA1 family. MdtL (TC 2.A.1.2.22) subfamily.

Its subcellular location is the cell inner membrane. The protein is Multidrug resistance protein MdtL of Klebsiella pneumoniae subsp. pneumoniae (strain ATCC 700721 / MGH 78578).